A 329-amino-acid chain; its full sequence is uncharacterized protein (329 aa).

Residues 1–32 form the signal peptide; the sequence is MSQDRGPRRPRRLEKCALISASATVLSLTASG. A lipid anchor (N-palmitoyl cysteine) is attached at Cys-33. The S-diacylglycerol cysteine moiety is linked to residue Cys-33.

It localises to the cell membrane. This is an uncharacterized protein from Streptomyces coelicolor (strain ATCC BAA-471 / A3(2) / M145).